Here is a 41-residue protein sequence, read N- to C-terminus: Plantazolicin (41 aa).

Positions 1–27 (MTKITIPTALSAKVHGEGQHLFEPMAA) are excised as a propeptide. An N2,N2-dimethylarginine; in form plantazolicin A modification is found at R28. The segment at residues 28–29 (RC) is a cross-link (thiazole-4-carboxylic acid (Arg-Cys)). 2 consecutive cross-links (5-methyloxazole-4-carboxylic acid (Cys-Thr)) follow at residues 29–30 (CT) and 31–32 (CT). Positions 30-31 (TC) form a cross-link, thiazole-4-carboxylic acid (Thr-Cys). The 5-methyloxazole-4-carboxylic acid (Thr-Thr) cross-link spans 32–33 (TT). The oxazole-4-carboxylic acid (Ile-Ser) cross-link spans 35 to 36 (IS). 3 cross-links (oxazole-4-carboxylic acid (Ser-Ser)) span residues 36-37 (SS), 37-38 (SS), and 38-39 (SS). The segment at residues 39–40 (ST) is a cross-link (5-methyloxazoline-4-carboxylic acid (Ser-Thr)).

Maturation of thiazole and oxazole containing antibiotics involves the enzymatic condensation of a Cys, Ser or Thr with the alpha-carbonyl of the preceding amino acid to form a thioether or ether bond, then dehydration to form a double bond with the alpha-amino nitrogen. Thiazoline or oxazoline ring are dehydrogenated to form thiazole or oxazole rings.

It is found in the secreted. It localises to the cell wall. In terms of biological role, peptide antibiotic inhibiting growth of Gram-positive bacteria. The mode of action appears to be disruption of cell walls and lysis of cells. The polypeptide is Plantazolicin (Bacillus pumilus (strain ATCC 7061 / DSM 27 / CCUG 26015 / JCM 2508 / NBRC 12092 / NCIMB 9369 / NCTC 10337 / NRRL NRS-272 / CCM 2144)).